The sequence spans 361 residues: Fructose-bisphosphate aldolase (361 aa).

S63 provides a ligand contact to D-glyceraldehyde 3-phosphate. The active-site Proton donor is the D110. Zn(2+)-binding residues include H111, D145, E175, and H227. G228 serves as a coordination point for dihydroxyacetone phosphate. H266 is a Zn(2+) binding site. Dihydroxyacetone phosphate-binding positions include 267 to 269 (GGS) and 288 to 291 (NLDT).

Belongs to the class II fructose-bisphosphate aldolase family. As to quaternary structure, homodimer. It depends on Zn(2+) as a cofactor.

The enzyme catalyses beta-D-fructose 1,6-bisphosphate = D-glyceraldehyde 3-phosphate + dihydroxyacetone phosphate. It participates in carbohydrate degradation; glycolysis; D-glyceraldehyde 3-phosphate and glycerone phosphate from D-glucose: step 4/4. In terms of biological role, catalyzes the aldol condensation of dihydroxyacetone phosphate (DHAP or glycerone-phosphate) with glyceraldehyde 3-phosphate (G3P) to form fructose 1,6-bisphosphate (FBP) in gluconeogenesis and the reverse reaction in glycolysis. The sequence is that of Fructose-bisphosphate aldolase (FBA1) from Kluyveromyces lactis (strain ATCC 8585 / CBS 2359 / DSM 70799 / NBRC 1267 / NRRL Y-1140 / WM37) (Yeast).